The following is a 120-amino-acid chain: Protein GP96 (120 aa).

The protein belongs to the herpesviridae UL96 family.

In Cavia porcellus (Guinea pig), this protein is Protein GP96.